The primary structure comprises 367 residues: Histidinol-phosphate aminotransferase 1 (367 aa).

Residue Lys229 is modified to N6-(pyridoxal phosphate)lysine.

It belongs to the class-II pyridoxal-phosphate-dependent aminotransferase family. Histidinol-phosphate aminotransferase subfamily. As to quaternary structure, homodimer. Pyridoxal 5'-phosphate serves as cofactor.

It catalyses the reaction L-histidinol phosphate + 2-oxoglutarate = 3-(imidazol-4-yl)-2-oxopropyl phosphate + L-glutamate. Its pathway is amino-acid biosynthesis; L-histidine biosynthesis; L-histidine from 5-phospho-alpha-D-ribose 1-diphosphate: step 7/9. This Idiomarina loihiensis (strain ATCC BAA-735 / DSM 15497 / L2-TR) protein is Histidinol-phosphate aminotransferase 1.